The following is a 369-amino-acid chain: Aminomethyltransferase (369 aa).

Belongs to the GcvT family. The glycine cleavage system is composed of four proteins: P, T, L and H.

The catalysed reaction is N(6)-[(R)-S(8)-aminomethyldihydrolipoyl]-L-lysyl-[protein] + (6S)-5,6,7,8-tetrahydrofolate = N(6)-[(R)-dihydrolipoyl]-L-lysyl-[protein] + (6R)-5,10-methylene-5,6,7,8-tetrahydrofolate + NH4(+). In terms of biological role, the glycine cleavage system catalyzes the degradation of glycine. This Xanthomonas axonopodis pv. citri (strain 306) protein is Aminomethyltransferase.